A 191-amino-acid polypeptide reads, in one-letter code: Mating-type-like protein ALPHA1 (191 aa).

Positions 118 to 174 (SKKRPMNAFMAFRTYYAQLGTGLKQNTLSVILSEAWNAPETDQNIWDIFAQQFNFAS) form a DNA-binding region, alpha box.

This sequence belongs to the MATALPHA1 family.

It is found in the nucleus. Mating type proteins are sequence specific DNA-binding proteins that act as master switches in yeast differentiation by controlling gene expression in a cell type-specific fashion. Transcriptional activator that induces the transcription of alpha-specific genes. The sequence is that of Mating-type-like protein ALPHA1 (MTL1ALPHA1) from Candida glabrata (strain ATCC 2001 / BCRC 20586 / JCM 3761 / NBRC 0622 / NRRL Y-65 / CBS 138) (Yeast).